Here is a 539-residue protein sequence, read N- to C-terminus: Gamma-2-syntrophin (539 aa).

The PDZ domain maps to 73-156; the sequence is TVTLRRQPVG…DVTITVEYLR (84 aa). The 126-residue stretch at 296–421 folds into the PH domain; it reads QVVHMGWVNE…WEKAFQRATF (126 aa).

This sequence belongs to the syntrophin family. In terms of assembly, interacts with the dystrophin protein DMD and related proteins DTNA and DTNB.

The protein localises to the cell membrane. The protein resides in the sarcolemma. Its subcellular location is the cytoplasm. It localises to the cytoskeleton. Adapter protein that binds to and probably organizes the subcellular localization of a variety of proteins. May link various receptors to the actin cytoskeleton and the dystrophin glycoprotein complex. The chain is Gamma-2-syntrophin (Sntg2) from Mus musculus (Mouse).